Here is a 391-residue protein sequence, read N- to C-terminus: Ribosomal RNA small subunit methyltransferase H (391 aa).

Positions 1–23 are disordered; sequence MDVDVQDDVQGRAGEGAEERAHD. S-adenosyl-L-methionine is bound by residues 59-61, Asp-78, Leu-112, Asp-126, and Gln-133; that span reads GGH. Positions 284–391 are disordered; the sequence is SSSSAPPDLP…EPGATVERTP (108 aa). Over residues 368-380 the composition is skewed to basic and acidic residues; the sequence is RTQEFETHPHLEP.

It belongs to the methyltransferase superfamily. RsmH family.

It localises to the cytoplasm. It catalyses the reaction cytidine(1402) in 16S rRNA + S-adenosyl-L-methionine = N(4)-methylcytidine(1402) in 16S rRNA + S-adenosyl-L-homocysteine + H(+). Functionally, specifically methylates the N4 position of cytidine in position 1402 (C1402) of 16S rRNA. The protein is Ribosomal RNA small subunit methyltransferase H of Kineococcus radiotolerans (strain ATCC BAA-149 / DSM 14245 / SRS30216).